A 274-amino-acid chain; its full sequence is Dermonecrotic toxin SaSicTox-betaIIB1 (274 aa).

The active site involves His-5. 2 residues coordinate Mg(2+): Glu-25 and Asp-27. His-41 serves as the catalytic Nucleophile. Disulfide bonds link Cys-45-Cys-51 and Cys-47-Cys-190. Asp-85 lines the Mg(2+) pocket.

This sequence belongs to the arthropod phospholipase D family. Class II subfamily. Mg(2+) serves as cofactor. As to expression, expressed by the venom gland.

It is found in the secreted. It carries out the reaction an N-(acyl)-sphingosylphosphocholine = an N-(acyl)-sphingosyl-1,3-cyclic phosphate + choline. The catalysed reaction is an N-(acyl)-sphingosylphosphoethanolamine = an N-(acyl)-sphingosyl-1,3-cyclic phosphate + ethanolamine. The enzyme catalyses a 1-acyl-sn-glycero-3-phosphocholine = a 1-acyl-sn-glycero-2,3-cyclic phosphate + choline. It catalyses the reaction a 1-acyl-sn-glycero-3-phosphoethanolamine = a 1-acyl-sn-glycero-2,3-cyclic phosphate + ethanolamine. In terms of biological role, dermonecrotic toxins cleave the phosphodiester linkage between the phosphate and headgroup of certain phospholipids (sphingolipid and lysolipid substrates), forming an alcohol (often choline) and a cyclic phosphate. This toxin acts on sphingomyelin (SM). It may also act on ceramide phosphoethanolamine (CPE), lysophosphatidylcholine (LPC) and lysophosphatidylethanolamine (LPE), but not on lysophosphatidylserine (LPS), and lysophosphatidylglycerol (LPG). It acts by transphosphatidylation, releasing exclusively cyclic phosphate products as second products. Induces dermonecrosis, hemolysis, increased vascular permeability, edema, inflammatory response, and platelet aggregation. The sequence is that of Dermonecrotic toxin SaSicTox-betaIIB1 from Sicarius albospinosus (Six-eyed crab spider).